A 349-amino-acid polypeptide reads, in one-letter code: UDP-3-O-acylglucosamine N-acyltransferase (349 aa).

H242 functions as the Proton acceptor in the catalytic mechanism.

Belongs to the transferase hexapeptide repeat family. LpxD subfamily. Homotrimer.

The catalysed reaction is a UDP-3-O-[(3R)-3-hydroxyacyl]-alpha-D-glucosamine + a (3R)-hydroxyacyl-[ACP] = a UDP-2-N,3-O-bis[(3R)-3-hydroxyacyl]-alpha-D-glucosamine + holo-[ACP] + H(+). Its pathway is bacterial outer membrane biogenesis; LPS lipid A biosynthesis. Functionally, catalyzes the N-acylation of UDP-3-O-acylglucosamine using 3-hydroxyacyl-ACP as the acyl donor. Is involved in the biosynthesis of lipid A, a phosphorylated glycolipid that anchors the lipopolysaccharide to the outer membrane of the cell. The polypeptide is UDP-3-O-acylglucosamine N-acyltransferase (Cytophaga hutchinsonii (strain ATCC 33406 / DSM 1761 / CIP 103989 / NBRC 15051 / NCIMB 9469 / D465)).